The sequence spans 784 residues: LPS-assembly protein LptD (784 aa).

The first 24 residues, 1-24 (MKKRIPTLLATMIATALYSQQGLA), serve as a signal peptide directing secretion. Cystine bridges form between Cys31/Cys724 and Cys173/Cys725.

Belongs to the LptD family. Component of the lipopolysaccharide transport and assembly complex. Interacts with LptE and LptA. Contains two intramolecular disulfide bonds.

It localises to the cell outer membrane. Together with LptE, is involved in the assembly of lipopolysaccharide (LPS) at the surface of the outer membrane. This chain is LPS-assembly protein LptD, found in Escherichia coli O1:K1 / APEC.